We begin with the raw amino-acid sequence, 211 residues long: Degradation in the endoplasmic reticulum protein 1 (211 aa).

N-acetylmethionine is present on M1. The Cytoplasmic portion of the chain corresponds to 1-14 (MDAVILNLLGDIPL). A helical transmembrane segment spans residues 15–32 (VTRLWTIGCLVLSGLTSL). The Lumenal portion of the chain corresponds to 33-67 (RIVDPGKVVYSYDLVFKKGQYGRLLYSIFDYGAFN). The helical transmembrane segment at 68 to 85 (WISMINIFVSANHLSTLE) threads the bilayer. Over 86-92 (NSFNLRR) the chain is Cytoplasmic. The helical transmembrane segment at 93–109 (KFCWIIFLLLVILVKMT) threads the bilayer. Residues 110–117 (SIEQPAAS) are Lumenal-facing. Residues 118-133 (LGVLLHENLVYYELKK) traverse the membrane as a helical segment. Topologically, residues 134–149 (NGNQMNVRFFGAIDVS) are cytoplasmic. The chain crosses the membrane as a helical span at residues 150–165 (PSIFPIYMNAVMYFVY). Residues 166–168 (KRS) are Lumenal-facing. Residues 169–189 (WLEIAMNFMPGHVIYYMDDII) traverse the membrane as a helical segment. The Cytoplasmic segment spans residues 190 to 211 (GKIYGIDLCKSPYDWFRNTETP).

Belongs to the derlin family. Component of the HRD1 ubiquitin ligase complex which contains the E3 ligase HRD1, its cofactors HRD3, USA1 and DER1, substrate recruiting factor YOS9 and CDC48-binding protein UBX2. Within the complex, interacts with USA1 (via C-terminus). In ERAD-L, HRD3 and YOS9 jointly bind misfolded glycoproteins in the endoplasmic reticulum (ER) lumen. Movement of ERAD-L substrates through the ER membrane is facilitated by HRD1 and DER1 which have lateral gates facing each other and which distort the membrane region between the lateral gates, making it much thinner than a normal phospholipid bilayer. Substrates insert into the membrane as a hairpin loop with one strand interacting with DER1 and the other with HRD1. The HRD1 complex interacts with the heterotrimeric CDC48-NPL4-UFD1 ATPase complex which is recruited by UBX2 via its interaction with CDC48 and which moves ubiquitinated substrates to the cytosol for targeting to the proteasome. In terms of processing, N-terminally acetylated by acetyltransferase NatB which enhances DER1 stability and is required for ERAD-L function.

The protein resides in the endoplasmic reticulum membrane. Component of the endoplasmic reticulum-associated degradation (ERAD) pathway. Specifically required for the ERAD-L pathway which mediates the degradation of proteins with misfolded lumenal domains within the endoplasmic reticulum (ER). Facilitates retrotranslocation of misfolded proteins from the ER lumen through the ER membrane in conjunction with HRD1. Both proteins have lateral gates facing each other and distort the membrane region between the lateral gates, making it much thinner than a normal phospholipid bilayer. Substrates insert into the membrane as a hairpin loop with one strand interacting with DER1 and the other with HRD1. This is Degradation in the endoplasmic reticulum protein 1 (DER1) from Saccharomyces cerevisiae (strain ATCC 204508 / S288c) (Baker's yeast).